Here is a 368-residue protein sequence, read N- to C-terminus: tRNA(Met) cytidine acetate ligase (368 aa).

ATP contacts are provided by residues 7–20 (IAEF…HKYL), glycine 96, asparagine 152, and arginine 175.

This sequence belongs to the TmcAL family.

Its subcellular location is the cytoplasm. The enzyme catalyses cytidine(34) in elongator tRNA(Met) + acetate + ATP = N(4)-acetylcytidine(34) in elongator tRNA(Met) + AMP + diphosphate. Catalyzes the formation of N(4)-acetylcytidine (ac(4)C) at the wobble position of elongator tRNA(Met), using acetate and ATP as substrates. First activates an acetate ion to form acetyladenylate (Ac-AMP) and then transfers the acetyl group to tRNA to form ac(4)C34. This Streptococcus pyogenes serotype M3 (strain SSI-1) protein is tRNA(Met) cytidine acetate ligase.